A 161-amino-acid chain; its full sequence is PRS fimbrial major pilin protein (161 aa).

The protein belongs to the fimbrial protein family.

Its subcellular location is the secreted. The protein localises to the fimbrium. Fimbriae (also called pili), polar filaments radiating from the surface of the bacterium to a length of 0.5-1.5 micrometers and numbering 100-300 per cell, enable bacteria to colonize the epithelium of specific host organs. This chain is PRS fimbrial major pilin protein (prsA), found in Escherichia coli.